Reading from the N-terminus, the 378-residue chain is MPNANQASAGVGALKEVLPGIRALGDLEAAEKVVKRCSGGSTVMVCVIGSTEISRVPGISAAGKTPESTFHTPAGDVELIYYDRIINAEEVPQNPVGAPSPAVITKAVVNLASIPFLTVDAGAAVKPACPYIDLGGEVARDFREGPALSEETYDRLLEFGKTLGKELTRDVDFLTVGESVPGGTTTAMAVMTALGYETSEKFASSSHDSPHDIKERVVKEGLEAQGVEPGDLDAHEAIRRFGDPMMPAVVGIIYGSRTPVLLAGGTQMAPILAYLAEEGQLDPERVFVGTTKYVVEDEDSDIESLFRQVGDYVLFSADPGFSESKFRGFRLYEEGYVKEGVGAGGAQVAAALKTKGEITPKDVLRECERVYERWMDKF.

Belongs to the UPF0284 family.

This is UPF0284 protein MK0224 from Methanopyrus kandleri (strain AV19 / DSM 6324 / JCM 9639 / NBRC 100938).